The sequence spans 476 residues: PRAME family member 5 (476 aa).

One copy of the LRR 1; degenerate repeat lies at 97-124; the sequence is RWKLQVLDLQDVCENFWMVWSEAMAHGC. The LRR 2; degenerate repeat unit spans residues 179–203; that stretch reads HLCCKKLKILGMPFRNIRSILKMVN. One copy of the LRR 3; degenerate repeat lies at 204–230; the sequence is LDCIQEVEVNCKWVLPILTQFTPYLGH. One copy of the LRR 4; degenerate repeat lies at 231–266; that stretch reads MRNLQKLVLSHMDVSRYVSPEQKKEIVTQFTTQFLK. LRR repeat units lie at residues 267 to 292, 293 to 324, 325 to 345, 349 to 376, and 377 to 401; these read LCCLQKLSMNSVSFLEGHLDQLLSCL, KTSLKVLTITNCVLLESDLKHLSQCPSISQLK, TLDLSGIRLTNYSLVPLQILL, AATLEYLDLDDCGIIDSQVNAILPALSR, and CFELNTFSFCGNPISMATLENLLSH.

The protein belongs to the PRAME family.

This is PRAME family member 5 from Homo sapiens (Human).